A 1426-amino-acid chain; its full sequence is DNA-directed RNA polymerase subunit beta' (1426 aa).

Residues aspartate 534, aspartate 536, and aspartate 538 each contribute to the Mg(2+) site. Zn(2+) contacts are provided by cysteine 1009, cysteine 1085, cysteine 1092, and cysteine 1095.

This sequence belongs to the RNA polymerase beta' chain family. The RNAP catalytic core consists of 2 alpha, 1 beta, 1 beta' and 1 omega subunit. When a sigma factor is associated with the core the holoenzyme is formed, which can initiate transcription. The cofactor is Mg(2+). Zn(2+) serves as cofactor.

It carries out the reaction RNA(n) + a ribonucleoside 5'-triphosphate = RNA(n+1) + diphosphate. Its function is as follows. DNA-dependent RNA polymerase catalyzes the transcription of DNA into RNA using the four ribonucleoside triphosphates as substrates. The protein is DNA-directed RNA polymerase subunit beta' of Mycoplasmopsis pulmonis (strain UAB CTIP) (Mycoplasma pulmonis).